The sequence spans 721 residues: Probable acyl-activating enzyme 17, peroxisomal (721 aa).

Positions 719–721 (SKL) match the Microbody targeting signal motif.

It belongs to the ATP-dependent AMP-binding enzyme family. As to expression, expressed in leaves, stems and developing seeds.

The protein localises to the peroxisome. Its function is as follows. May act as an acid--thiol ligase that activates carboxylic acids by forming acyl-CoAs. The protein is Probable acyl-activating enzyme 17, peroxisomal (AAE17) of Arabidopsis thaliana (Mouse-ear cress).